We begin with the raw amino-acid sequence, 259 residues long: uncharacterized protein (259 aa).

Residues His9, His11, Glu97, His133, His157, and Asp207 each coordinate a divalent metal cation.

It belongs to the metallo-dependent hydrolases superfamily. TatD-type hydrolase family. The cofactor is a divalent metal cation.

This is an uncharacterized protein from Escherichia coli (strain K12).